Reading from the N-terminus, the 167-residue chain is Cell number regulator 3 (167 aa).

The helical transmembrane segment at 67–84 (GMTSCGTSAALFALIQWL) threads the bilayer.

The protein belongs to the cornifelin family. Expressed only in pollen.

Its subcellular location is the membrane. This is Cell number regulator 3 (CNR3) from Zea mays (Maize).